Here is a 99-residue protein sequence, read N- to C-terminus: Antitoxin VapB47 (99 aa).

It belongs to the phD/YefM antitoxin family.

Its function is as follows. Antitoxin component of a type II toxin-antitoxin (TA) system. This Mycobacterium tuberculosis (strain CDC 1551 / Oshkosh) protein is Antitoxin VapB47 (vapB47).